Reading from the N-terminus, the 412-residue chain is Glucose-1-phosphate adenylyltransferase (412 aa).

Alpha-D-glucose 1-phosphate contacts are provided by residues Tyr-98, Gly-163, 178-179 (EK), and Ser-189.

The protein belongs to the bacterial/plant glucose-1-phosphate adenylyltransferase family. Homotetramer.

It catalyses the reaction alpha-D-glucose 1-phosphate + ATP + H(+) = ADP-alpha-D-glucose + diphosphate. It participates in glycan biosynthesis; glycogen biosynthesis. Functionally, involved in the biosynthesis of ADP-glucose, a building block required for the elongation reactions to produce glycogen. Catalyzes the reaction between ATP and alpha-D-glucose 1-phosphate (G1P) to produce pyrophosphate and ADP-Glc. The polypeptide is Glucose-1-phosphate adenylyltransferase (Thermosipho melanesiensis (strain DSM 12029 / CIP 104789 / BI429)).